A 77-amino-acid polypeptide reads, in one-letter code: Conotoxin PnMKLT1-0122 (77 aa).

Residues 1-22 (MKLTCMMIVAVLFLTAWTFATA) form the signal peptide. A propeptide spanning residues 23–49 (EDPRNGLENLFSKAHHEMKNPEDSKLN) is cleaved from the precursor. 3 cysteine pairs are disulfide-bonded: Cys-52–Cys-67, Cys-59–Cys-71, and Cys-66–Cys-76.

The protein belongs to the conotoxin O1 superfamily. In terms of tissue distribution, expressed by the venom duct.

The protein localises to the secreted. This Conus pennaceus (Feathered cone) protein is Conotoxin PnMKLT1-0122.